The following is a 150-amino-acid chain: UPF0178 protein Bcep1808_1605 (150 aa).

Belongs to the UPF0178 family.

The sequence is that of UPF0178 protein Bcep1808_1605 from Burkholderia vietnamiensis (strain G4 / LMG 22486) (Burkholderia cepacia (strain R1808)).